The following is a 167-amino-acid chain: MNEVGVRFERGKLFLPHVMMAADAMTAGVNALKDLMPEGSASSKMGVIVNGTVEGDVHDIGKSIVSTMLQSAGFEVHDIGRDVPIRNFIEKAKEVNADMIGLSALMTTTLPGQRDVIELLKEEGLRDKVKVMIGGAPATQAWADKIGADCYAENASEAVTKAKELLA.

Residues 1-44 (MNEVGVRFERGKLFLPHVMMAADAMTAGVNALKDLMPEGSASSK) enclose the B12-binding N-terminal domain. The 123-residue stretch at 45-167 (MGVIVNGTVE…AVTKAKELLA (123 aa)) folds into the B12-binding domain. H58 is a methylcob(III)alamin binding site.

It belongs to the methylamine corrinoid protein family.

Its pathway is one-carbon metabolism; methanogenesis from dimethylamine. Acts as a methyl group carrier between MtbB and MtbA. This chain is Dimethylamine corrinoid protein 3 (mtbC3), found in Methanosarcina mazei (strain ATCC BAA-159 / DSM 3647 / Goe1 / Go1 / JCM 11833 / OCM 88) (Methanosarcina frisia).